We begin with the raw amino-acid sequence, 39 residues long: Colipase (39 aa).

Disulfide bonds link Cys-16–Cys-27 and Cys-22–Cys-38.

It belongs to the colipase family. In terms of assembly, forms a 1:1 stoichiometric complex with pancreatic lipase. In terms of tissue distribution, expressed by the pancreas.

It is found in the secreted. In terms of biological role, colipase is a cofactor of pancreatic lipase. It allows the lipase to anchor itself to the lipid-water interface. Without colipase the enzyme is washed off by bile salts, which have an inhibitory effect on the lipase. This Squalus acanthias (Spiny dogfish) protein is Colipase.